A 405-amino-acid chain; its full sequence is Acetate kinase (405 aa).

Position 13 (Asn-13) interacts with Mg(2+). Lys-20 contacts ATP. Arg-94 serves as a coordination point for substrate. Asp-153 acts as the Proton donor/acceptor in catalysis. Residues 213 to 217 (HLGNG), 288 to 290 (DFR), and 336 to 340 (GIGEN) contribute to the ATP site. Glu-390 provides a ligand contact to Mg(2+).

The protein belongs to the acetokinase family. As to quaternary structure, homodimer. The cofactor is Mg(2+). Mn(2+) serves as cofactor.

The protein localises to the cytoplasm. The catalysed reaction is acetate + ATP = acetyl phosphate + ADP. Its pathway is metabolic intermediate biosynthesis; acetyl-CoA biosynthesis; acetyl-CoA from acetate: step 1/2. Its function is as follows. Catalyzes the formation of acetyl phosphate from acetate and ATP. Can also catalyze the reverse reaction. This chain is Acetate kinase, found in Buchnera aphidicola subsp. Acyrthosiphon pisum (strain APS) (Acyrthosiphon pisum symbiotic bacterium).